An 835-amino-acid polypeptide reads, in one-letter code: Protein translocase subunit SecA 1 (835 aa).

ATP contacts are provided by residues Gln-85, Gly-103–Thr-107, and Asp-492. The disordered stretch occupies residues Val-788 to Val-807. Cys-819, Cys-821, Cys-830, and Cys-831 together coordinate Zn(2+).

It belongs to the SecA family. In terms of assembly, monomer and homodimer. Part of the essential Sec protein translocation apparatus which comprises SecA, SecYEG and auxiliary proteins SecDF. Other proteins may also be involved. The cofactor is Zn(2+).

The protein localises to the cell membrane. The protein resides in the cytoplasm. The enzyme catalyses ATP + H2O + cellular proteinSide 1 = ADP + phosphate + cellular proteinSide 2.. Its function is as follows. Part of the Sec protein translocase complex. Interacts with the SecYEG preprotein conducting channel. Has a central role in coupling the hydrolysis of ATP to the transfer of proteins into and across the cell membrane, serving as an ATP-driven molecular motor driving the stepwise translocation of polypeptide chains across the membrane. The polypeptide is Protein translocase subunit SecA 1 (Bacillus thuringiensis subsp. konkukian (strain 97-27)).